Here is a 1479-residue protein sequence, read N- to C-terminus: ESX secretion system protein EccC (1479 aa).

The Cytoplasmic portion of the chain corresponds to 1–235 (MSQLWVLYET…SQEGDGDPRG (235 aa)). The helical transmembrane segment at 236-256 (LWLMVLPPVMMLLVIGAVALI) threads the bilayer. Residues 257–259 (QPR) lie on the Extracellular side of the membrane. Residues 260–280 (GVFIMISIAMFATTIVTSTAQ) traverse the membrane as a helical segment. Residues 281-1479 (YMREKKARQM…DQKIQIPKVE (1199 aa)) lie on the Cytoplasmic side of the membrane. Residues 291–321 (RKEKRRRIYTNYLEQKREELQALSEKQRNVL) are a coiled coil. FtsK domains are found at residues 652 to 848 (NDVV…NDSK) and 984 to 1168 (QSDY…SEKF). Residue 672-679 (GTTGSGKS) coordinates ATP. Residue Glu785 is part of the active site. ATP contacts are provided by residues 1004-1009 (GYGKST), Asn1036, Asp1105, Ile1197, Asp1206, 1287-1291 (RKGKT), and Ile1475. A FtsK 3 domain is found at 1267-1444 (VRPVAINMRT…ILVTKKSEQS (178 aa)).

In terms of assembly, whole protein oligomerizes in native gels. Part of the ESX / type VII secretion system (T7SS), which is composed of cytosolic and membrane components. The ESX membrane complex is composed of EccB, EccC and EccD.

It localises to the cell membrane. With respect to regulation, esxB binding to the third FtsK domain causes multimerization; a subsequent unknown step relieves the allosteric inhibition of linker 2 on FtsK domain 1, activating the ATPase activity. In terms of biological role, part of the ESX specialized secretion system, which exports proteins from the cell including EsxA (ESAT-6) and EsxB (CFP-10). Might be the translocase subunit. Probably only the first FtsK domain can hydrolyze ATP. This Geobacillus thermodenitrificans (strain NG80-2) protein is ESX secretion system protein EccC.